Consider the following 1051-residue polypeptide: Ubiquitin-activating enzyme E1 2 (1051 aa).

Residues 1–32 show a composition bias toward basic and acidic residues; the sequence is MLPRKREIVAGEVEDLQKKTRAGEGEATREEG. Positions 1 to 42 are disordered; the sequence is MLPRKREIVAGEVEDLQKKTRAGEGEATREEGDAAMAGRGNE. A run of 2 repeats spans residues 56–194 and 453–605. The tract at residues 56–605 is 2 approximate repeats; sequence GRETMKPLFG…GAKCNTQMVI (550 aa). ATP contacts are provided by residues Ala-472, Asp-498, Arg-509, Lys-522, and 570 to 571; that span reads DN. Residue Cys-626 is the Glycyl thioester intermediate of the active site.

Belongs to the ubiquitin-activating E1 family. In terms of assembly, monomer.

The enzyme catalyses ATP + ubiquitin + [E1 ubiquitin-activating enzyme]-L-cysteine = AMP + diphosphate + S-ubiquitinyl-[E1 ubiquitin-activating enzyme]-L-cysteine.. The protein operates within protein modification; protein ubiquitination. Functionally, activates ubiquitin by first adenylating its C-terminal glycine residue with ATP, and thereafter linking this residue to the side chain of a cysteine residue in E1, yielding a ubiquitin-E1 thioester and free AMP. This is Ubiquitin-activating enzyme E1 2 (UBA2) from Triticum aestivum (Wheat).